We begin with the raw amino-acid sequence, 391 residues long: Chorismate synthase (391 aa).

Arg-48 contacts NADP(+). FMN contacts are provided by residues Arg-126–Ser-128, Gly-286, Lys-301–Ser-305, and Arg-328.

It belongs to the chorismate synthase family. It depends on FMNH2 as a cofactor.

It carries out the reaction 5-O-(1-carboxyvinyl)-3-phosphoshikimate = chorismate + phosphate. Its pathway is metabolic intermediate biosynthesis; chorismate biosynthesis; chorismate from D-erythrose 4-phosphate and phosphoenolpyruvate: step 7/7. In terms of biological role, catalyzes the anti-1,4-elimination of the C-3 phosphate and the C-6 proR hydrogen from 5-enolpyruvylshikimate-3-phosphate (EPSP) to yield chorismate, which is the branch point compound that serves as the starting substrate for the three terminal pathways of aromatic amino acid biosynthesis. This reaction introduces a second double bond into the aromatic ring system. This Saccharolobus islandicus (strain M.16.27) (Sulfolobus islandicus) protein is Chorismate synthase.